Consider the following 314-residue polypeptide: Olfactory receptor 9A1 (314 aa).

The Extracellular portion of the chain corresponds to 1 to 24; that stretch reads MLGNYSSATEFFLLGFPGSQEVCR. N-linked (GlcNAc...) asparagine glycosylation is present at Asn-4. A helical transmembrane segment spans residues 25–45; the sequence is ILFATFFLLYAVTVMGNVVII. At 46-64 the chain is on the cytoplasmic side; it reads ITVCVDKCLQSPIYFFLGH. The chain crosses the membrane as a helical span at residues 65 to 85; sequence LCVLEILITSTAVPFMLWGLL. The Extracellular portion of the chain corresponds to 86 to 99; the sequence is LPSTQIMSLTACAA. A disulfide bond links Cys-97 and Cys-179. A helical transmembrane segment spans residues 100-120; that stretch reads QLYLYLSLGTLELALMGVMAV. The Cytoplasmic segment spans residues 121–140; sequence DRYVAVCNPLRYNIIMNSST. Residues 141 to 161 form a helical membrane-spanning segment; that stretch reads FIWVIIVSWVLGFLSEIWPVY. Topologically, residues 162–196 are extracellular; sequence ATFQLTFCKSSVLDHFYCDRGQLLKVSCEDTLFRE. A helical membrane pass occupies residues 197–217; that stretch reads FILFLMAVFIIIGSLIPTIVS. Residues 218–239 lie on the Cytoplasmic side of the membrane; sequence YTYIISTNLKIPSASGWRKSFS. Residues 240–260 traverse the membrane as a helical segment; it reads TCASHFTYVVIGYGSCLFLYV. Residues 261 to 271 lie on the Extracellular side of the membrane; sequence KPKQTQAAEYN. Residues 272 to 292 form a helical membrane-spanning segment; sequence RVVSLLVLVVTPFLNPFIFTL. Over 293-314 the chain is Cytoplasmic; it reads RNDKFIQAFGDGMKHCYKLLKN.

Belongs to the G-protein coupled receptor 1 family.

It is found in the cell membrane. Functionally, odorant receptor. In Homo sapiens (Human), this protein is Olfactory receptor 9A1 (OR9A1P).